Reading from the N-terminus, the 372-residue chain is Cell division protein FtsZ 1 (372 aa).

GTP is bound by residues 51–55 (GAGCN), 138–140 (GTG), glutamate 169, arginine 173, and aspartate 216. The segment at 351–372 (QEETPEPSEEEVPPVKIDIPEL) is disordered. Residues 353–362 (ETPEPSEEEV) show a composition bias toward acidic residues.

This sequence belongs to the FtsZ family. In terms of assembly, homodimer. Polymerizes to form a dynamic ring structure in a strictly GTP-dependent manner. Interacts directly with several other division proteins.

It localises to the cytoplasm. Essential cell division protein that forms a contractile ring structure (Z ring) at the future cell division site. The regulation of the ring assembly controls the timing and the location of cell division. One of the functions of the FtsZ ring is to recruit other cell division proteins to the septum to produce a new cell wall between the dividing cells. Binds GTP and shows GTPase activity. The chain is Cell division protein FtsZ 1 from Pyrococcus abyssi (strain GE5 / Orsay).